We begin with the raw amino-acid sequence, 350 residues long: Guanine nucleotide-binding protein G(t) subunit alpha (350 aa).

The segment at 1-21 (MGAGASAEEKHSRELEKKLKE) is disordered. G2 is lipidated: N-myristoyl glycine. Residues 7–21 (AEEKHSRELEKKLKE) show a composition bias toward basic and acidic residues. The region spanning 28–350 (RTVKLLLLGA…KENLKDCGLF (323 aa)) is the G-alpha domain. Residues 31–44 (KLLLLGAGESGKST) are G1 motif. Residues 36–43 (GAGESGKS), 171–177 (LRSRVKT), 196–200 (DVGGQ), 265–268 (NKKD), and A322 each bind GTP. Mg(2+) contacts are provided by S43 and T177. Residues 169-177 (DVLRSRVKT) form a G2 motif region. Residues 192-201 (FRMFDVGGQR) are G3 motif. A G4 motif region spans residues 261–268 (VLFLNKKD). Residues 320 to 325 (TCATDT) are G5 motif.

The protein belongs to the G-alpha family. G(i/o/t/z) subfamily. In terms of assembly, g proteins are composed of 3 units; alpha, beta and gamma. The alpha chain contains the guanine nucleotide binding site.

Functionally, guanine nucleotide-binding proteins (G proteins) are involved as modulators or transducers in various transmembrane signaling systems. Transducin is an amplifier and one of the transducers of a visual impulse that performs the coupling between rhodopsin and cGMP-phosphodiesterase. This Xenopus laevis (African clawed frog) protein is Guanine nucleotide-binding protein G(t) subunit alpha (gnat).